A 109-amino-acid chain; its full sequence is RNA-binding protein Hfq (109 aa).

One can recognise a Sm domain in the interval 9–68; the sequence is DPFLNALRKEKVSVSVYLVNGIKLQGQVEAFDQFCIVLRNTVNQMVYKHAISTIVPAKSV. The disordered stretch occupies residues 77 to 109; sequence PYHQNSNDEQDENVDDIHSDDLEIQENEGNIHE.

It belongs to the Hfq family. Homohexamer.

In terms of biological role, RNA chaperone that binds small regulatory RNA (sRNAs) and mRNAs to facilitate mRNA translational regulation in response to envelope stress, environmental stress and changes in metabolite concentrations. Also binds with high specificity to tRNAs. The protein is RNA-binding protein Hfq of Francisella tularensis subsp. tularensis (strain FSC 198).